A 1285-amino-acid chain; its full sequence is Peroxidasin homolog pxn-1 (1285 aa).

The N-terminal stretch at 1-20 (MNLYLLLLVIATSSWQFVAG) is a signal peptide. Residues 21 to 53 (LECPVECTCDKKGLVVDCSSSGLTRIPKNISRN) form the LRRNT domain. LRR repeat units follow at residues 27 to 49 (CTCDKKGLVVDCSSSGLTRIPKN), 50 to 72 (ISRNVRSLVIRNNRIHKLKRSDL), 73 to 96 (EGFNQLETLVLTHNKIKIIEENVL), 97 to 120 (DHLPELKRLSLAHNELVYIPPLCS), 122 to 143 (SRPLASLNLKRNHIQFIDEQVL), 145 to 168 (YFPDLTQLDFSHNRIQSLRTKLFD), and 204 to 227 (KVYCTNPVELRHQALDEVDDSALT). An N-linked (GlcNAc...) asparagine glycan is attached at N49. The region spanning 180–228 (SNPWHCDCRASKVKALLQKVKWEKKVYCTNPVELRHQALDEVDDSALTC) is the LRRCT domain. Residue N248 is glycosylated (N-linked (GlcNAc...) asparagine). The segment at 305–324 (RQSQHQGNGSPQFTYKPRDN) is disordered. The span at 307–317 (SQHQGNGSPQF) shows a compositional bias: polar residues. 2 consecutive Ig-like C2-type domains span residues 315–401 (PQFT…FSLD) and 408–495 (PNIY…AKLT). Disulfide bonds link C336–C385 and C429–C479. Residues 508–550 (QIDEELLRAIAQKARQNVENAVEKTRKQLTQDKVTNTNDLKRL) adopt a coiled-coil conformation. N-linked (GlcNAc...) asparagine glycosylation is present at N595. Residues C625 and C641 are joined by a disulfide bond. D719 provides a ligand contact to heme b. The active-site Proton acceptor is H720. A Ca(2+)-binding site is contributed by D721. 2 disulfides stabilise this stretch: C740-C750 and C744-C771. N741 carries N-linked (GlcNAc...) asparagine glycosylation. Positions 803, 805, 807, and 809 each coordinate Ca(2+). The N-linked (GlcNAc...) asparagine glycan is linked to N858. Heme b-binding residues include E877 and H973. LRR repeat units follow at residues 998–1022 (HKAFFTPELVLTQGGVDPLLRGLFA) and 1049–1073 (VSLDLAVMNIQRSRDHGLPSYTEYR). Intrachain disulfides connect C1076-C1133 and C1174-C1201. An LRR 12 repeat occupies 1168 to 1189 (TLARLFCDNGDNIDRIQKDVFM).

Belongs to the peroxidase family. XPO subfamily. Requires Ca(2+) as cofactor. The cofactor is heme b. As to expression, expressed in the ventral nerve cord, the dorsal nerve cord, head neurons, GABAergic and cholinergic neurons, body wall muscles, vulval muscles, uterine muscles, intestine, the hypodermis and in coelomocytes.

It localises to the secreted. The protein localises to the extracellular space. Its subcellular location is the extracellular matrix. It carries out the reaction L-lysyl-[collagen] + L-methionyl-[collagen] + H2O2 = [collagen]-L-lysyl-N-S-L-methionyl-[collagen] + 2 H2O + H(+). It catalyses the reaction bromide + H2O2 = hypobromite + H2O. The enzyme catalyses L-lysyl-[collagen] + L-methionyl-[collagen] + hypobromite = [collagen]-L-lysyl-N-S-L-methionyl-[collagen] + bromide + H2O + H(+). The catalysed reaction is L-tyrosyl-[protein] + bromide + H2O2 + H(+) = 3-bromo-L-tyrosyl-[protein] + 2 H2O. It carries out the reaction hypobromite + L-tyrosyl-[protein] + H(+) = 3-bromo-L-tyrosyl-[protein] + H2O. Functionally, catalyzes the two-electron oxidation of bromide by hydrogen peroxide and generates hypobromite as a reactive intermediate which mediates the formation of sulfilimine cross-links between methionine and hydroxylysine residues within an uncross-linked collagen IV NC1 hexamer. Plays a role in the attachment of tissues and in axonal guidance during early developmental stages. May functionally antagonize the peroxidasin pxn-2 to maintain neuronal development. The sequence is that of Peroxidasin homolog pxn-1 from Caenorhabditis elegans.